The primary structure comprises 121 residues: MTQINTYFNIADNSGVKKILCIQNLTKKTKKIEIGDLIVGVIKKINNTSKLIYSNIVYGIVIRLKKNINLYKKYNISFNDNSAVLVDKNLNPIGSRIFGTIPKFLKKKNYLKLYSLTVDFI.

It belongs to the universal ribosomal protein uL14 family. In terms of assembly, part of the 50S ribosomal subunit.

It is found in the plastid. It localises to the apicoplast. In terms of biological role, binds to 23S rRNA. The polypeptide is Large ribosomal subunit protein uL14c (rpl14) (Eimeria tenella (Coccidian parasite)).